Consider the following 305-residue polypeptide: N-acetylglucosamine-1-phosphotransferase subunit gamma (305 aa).

Positions methionine 1–alanine 24 are cleaved as a signal peptide. Positions glycine 69–proline 171 constitute an MRH domain. Cysteine 71 and cysteine 84 are joined by a disulfide. Asparagine 88 and asparagine 115 each carry an N-linked (GlcNAc...) asparagine glycan. Intrachain disulfides connect cysteine 129–cysteine 157 and cysteine 142–cysteine 169. Residues valine 176 to leucine 279 form the DMAP1-binding domain. The interval glycine 267–leucine 305 is disordered. Basic and acidic residues predominate over residues histidine 281–arginine 296.

As to quaternary structure, homodimer; disulfide-linked. Hexamer of two alpha (GNPTAB), two beta (GNPTAB) and two gamma (GNPTG) subunits; disulfide-linked. The alpha and/or the beta subunits of the enzyme constitute the catalytic subunits. Cys-245 mediates the formation of the interchain disulfide bond for formation of the homodimer. Cys-142, Cys-157 and Cys-169 are involved in intramolecular disulfide bonds formation. Widely expressed.

It is found in the secreted. The protein localises to the golgi apparatus. Non-catalytic subunit of the N-acetylglucosamine-1-phosphotransferase complex, an enzyme that catalyzes the formation of mannose 6-phosphate (M6P) markers on high mannose type oligosaccharides in the Golgi apparatus. Binds and presents the high mannose glycans of the acceptor to the catalytic alpha and beta subunits (GNPTAB). Enhances the rate of N-acetylglucosamine-1-phosphate transfer to the oligosaccharides of acid hydrolase acceptors. The sequence is that of N-acetylglucosamine-1-phosphotransferase subunit gamma (GNPTG) from Homo sapiens (Human).